Here is a 252-residue protein sequence, read N- to C-terminus: Probable transcriptional regulatory protein Tmel_0985 (252 aa).

The protein belongs to the TACO1 family.

The protein resides in the cytoplasm. The sequence is that of Probable transcriptional regulatory protein Tmel_0985 from Thermosipho melanesiensis (strain DSM 12029 / CIP 104789 / BI429).